Consider the following 303-residue polypeptide: Probable serine/threonine-protein kinase FPV212 (303 aa).

Residues 25 to 303 (WILGKQLGSG…NYESLKQMFL (279 aa)) form the Protein kinase domain. ATP contacts are provided by residues 31-39 (LGSGGFGLV) and K54. D160 (proton acceptor) is an active-site residue.

Belongs to the protein kinase superfamily. Ser/Thr protein kinase family. Poxviruses subfamily.

It carries out the reaction L-seryl-[protein] + ATP = O-phospho-L-seryl-[protein] + ADP + H(+). The enzyme catalyses L-threonyl-[protein] + ATP = O-phospho-L-threonyl-[protein] + ADP + H(+). This chain is Probable serine/threonine-protein kinase FPV212, found in Vertebrata (FPV).